The following is a 2055-amino-acid chain: Citron Rho-interacting kinase (2055 aa).

An N-acetylmethionine modification is found at Met-1. Positions 97-359 (FEVRSLVGCG…FEGLCCHPFF (263 aa)) constitute a Protein kinase domain. ATP contacts are provided by residues 103 to 111 (VGCGHFAEV) and Lys-126. Asp-221 serves as the catalytic Proton acceptor. An AGC-kinase C-terminal domain is found at 360 to 430 (ARTDWNNIRN…SKALGYLGRS (71 aa)). A phosphoserine mark is found at Ser-432, Ser-439, Ser-479, and Ser-581. Coiled-coil stretches lie at residues 441-1086 (AKVS…QWEA), 1091-1247 (LGDE…VLYS), and 1275-1325 (AKKK…RKAT). Residues 1132–1328 (LAVKEHKAEI…AAHRKATDHP (197 aa)) form an interaction with Rho/Rac region. Residue Tyr-1237 is modified to Phosphotyrosine. The span at 1316 to 1329 (REEAAHRKATDHPH) shows a compositional bias: basic and acidic residues. 2 disordered regions span residues 1316 to 1336 (REEA…PATA) and 1348 to 1377 (SPEH…EFSR). Over residues 1353–1363 (PSAMSLLAPPS) the composition is skewed to low complexity. A compositionally biased stretch (basic and acidic residues) spans 1365-1377 (RRKESSTPEEFSR). A Phorbol-ester/DAG-type zinc finger spans residues 1388 to 1437 (PHRFNVGLNMRATKCAVCLDTVHFGRQASKCLECQVMCHPKCSTCLPATC). The PH domain maps to 1469–1589 (SLHLEGWMKV…WVTALESVVA (121 aa)). Residues 1617 to 1907 (RLDMNCTLPF…RYLGPAISSG (291 aa)) enclose the CNH domain. The residue at position 1747 (Lys-1747) is an N6-acetyllysine. Positions 1932–2040 (SGTEQHRVPS…RGRLPAGAVR (109 aa)) are disordered. Residues 1939-1948 (VPSTSRSSPN) show a composition bias toward polar residues. Position 1966 is a phosphoserine (Ser-1966). A compositionally biased stretch (basic and acidic residues) spans 1974 to 2031 (SHPREPSTPHRYRDREGRTELRRDKSPGRPLEREKSPGRMLSTRRERSPGRLFEDSSR). Residues 1979–1984 (PSTPHR) carry the SH3-binding motif. The residue at position 2021 (Ser-2021) is a Phosphoserine. Thr-2041 carries the phosphothreonine modification.

Belongs to the protein kinase superfamily. AGC Ser/Thr protein kinase family. Interacts with TTC3. Homodimer. Directly interacts with KIF14 depending on the activation state (stronger interaction with the kinase-dead form). In terms of tissue distribution, a major signal was observed in testis and brain, but it was also detected in thymus, spleen, kidney, heart and lung.

It is found in the cytoplasm. It carries out the reaction L-seryl-[protein] + ATP = O-phospho-L-seryl-[protein] + ADP + H(+). The catalysed reaction is L-threonyl-[protein] + ATP = O-phospho-L-threonyl-[protein] + ADP + H(+). Plays a role in cytokinesis. Required for KIF14 localization to the central spindle and midbody. Probable RHO/RAC effector that binds to the GTP-bound forms of RHO and RAC1. It probably binds p21 with a tighter specificity in vivo. Displays serine/threonine protein kinase activity. Plays an important role in the regulation of cytokinesis and the development of the central nervous system. Phosphorylates MYL9/MLC2. The chain is Citron Rho-interacting kinase (Cit) from Mus musculus (Mouse).